The chain runs to 245 residues: Rhamnogalacturonan acetylesterase (245 aa).

The N-terminal stretch at 1–17 is a signal peptide; it reads MKSIALTSLSLLPSALA. The active-site Nucleophile is serine 26. A disulfide bridge links cysteine 100 with cysteine 108. Catalysis depends on residues aspartate 204 and histidine 207. Cysteine 226 and cysteine 244 are oxidised to a cystine.

Belongs to the 'GDSL' lipolytic enzyme family.

It is found in the secreted. It carries out the reaction Hydrolytic cleavage of 2-O-acetyl- or 3-O-acetyl groups of alpha-D-galacturonic acid in rhamnogalacturonan I.. Plays a key role in the degradation of rhamnogalacturonan in the cell wall. Involved in degradation of pectin. In Emericella nidulans (strain FGSC A4 / ATCC 38163 / CBS 112.46 / NRRL 194 / M139) (Aspergillus nidulans), this protein is Rhamnogalacturonan acetylesterase.